Here is a 160-residue protein sequence, read N- to C-terminus: Large ribosomal subunit protein eL21 (160 aa).

Basic and acidic residues-rich tracts occupy residues 112–123 (NDQKKKEAKEKG) and 136–145 (REAHFVRTNG). A disordered region spans residues 112–145 (NDQKKKEAKEKGTWVQLKRQPAPPREAHFVRTNG).

It belongs to the eukaryotic ribosomal protein eL21 family. In terms of assembly, component of the large ribosomal subunit.

The protein resides in the cytoplasm. It is found in the cytosol. It localises to the endoplasmic reticulum. Component of the large ribosomal subunit. The ribosome is a large ribonucleoprotein complex responsible for the synthesis of proteins in the cell. This chain is Large ribosomal subunit protein eL21 (RPL21), found in Capra hircus (Goat).